The chain runs to 27 residues: Palustrin-1d (27 aa).

Cys-21 and Cys-27 are joined by a disulfide.

Expressed by the skin glands.

The protein resides in the secreted. Functionally, antimicrobial activity against Gram-negative bacterium E.coli. In Lithobates palustris (Pickerel frog), this protein is Palustrin-1d.